Reading from the N-terminus, the 865-residue chain is Alanine--tRNA ligase (865 aa).

Residues His-552, His-556, Cys-654, and His-658 each contribute to the Zn(2+) site.

It belongs to the class-II aminoacyl-tRNA synthetase family. Zn(2+) is required as a cofactor.

It is found in the cytoplasm. The catalysed reaction is tRNA(Ala) + L-alanine + ATP = L-alanyl-tRNA(Ala) + AMP + diphosphate. Its function is as follows. Catalyzes the attachment of alanine to tRNA(Ala) in a two-step reaction: alanine is first activated by ATP to form Ala-AMP and then transferred to the acceptor end of tRNA(Ala). Also edits incorrectly charged Ser-tRNA(Ala) and Gly-tRNA(Ala) via its editing domain. This Coxiella burnetii (strain RSA 331 / Henzerling II) protein is Alanine--tRNA ligase.